Consider the following 158-residue polypeptide: UPF0260 protein RHE_CH01262 (158 aa).

The protein belongs to the UPF0260 family.

The polypeptide is UPF0260 protein RHE_CH01262 (Rhizobium etli (strain ATCC 51251 / DSM 11541 / JCM 21823 / NBRC 15573 / CFN 42)).